The sequence spans 776 residues: MASLIYRQLLTNSYTVELSDEIQEIGSTKTQNVTVNPGPFAQTNYASVNWGPGETNDSTTVEPVLDGPYQPTTFNPPVSYWMLLAPTNAGVVDQGTNNTNRWLATILIKPNVQQVERTYTLFGQQVQVTVSNDSQTKWKFVDLSKQTQDGNYSQHGPLLSTPKLYGVMKHGGKIYTYNGETPNATTGYYSTTNFDTVNMTAYCDFYIIPLAQEAKCTEYINNGLPPIQNTRNIVPVSIVSRNIVYTRAQPNQDIVVSKTSLWKEMQYNRDIVIRFKFANSIIKSGGLGYKWSEVSFKPANYQYTYTRDGEEVTAHTTCSVNGINDFNYNGGSLPTDFVISKYEVIKENSFVYIDYWDDSQAFRNMVYVRSLAADLNSVMCTGGDYSFAIPVGNYPVMTGGAVSLHSAGVTLSTQFTDFVSLNSLRFRFRLSVEEPPFSILRTRVSGLYGLPAAKPNNSQEYYEIAGRFSLISLVPSNDDYQTPIINSVTVRQDLERQLGELRDEFNNLSQQIAMSQLIDLALLPLDMFSMFSGIKSTIDAAKSMATNVMKRFKKSSLANSVSTLTDSLSDAASSISRSASVRSVSSTASAWTEVSNITSDINVTTSSISTQTSTISRRLRLKEMATQTDGMNFDDISAAVLKTKIDKSTQLNTNTLPEIVTEASEKFIPNRAYRVIKDDEVLEASTDGKYFAYKVETILKRFHSMYKFADLVTDSPVISAIIDFKTLKNLNDNYGISRQQALNLLRSDPRVLREFINQDNPIIRNRIESLIMQCRL.

The tract at residues 65–224 (LDGPYQPTTF…KCTEYINNGL (160 aa)) is spike head. A disulfide bond links C203 and C216. The spike body and stalk (antigen domain) stretch occupies residues 248-479 (AQPNQDIVVS…LISLVPSNDD (232 aa)). The DGE motif; interaction with ITGA2/ITGB1 heterodimer motif lies at 308–310 (DGE). A disulfide bridge links C318 with C380. Residues 389–409 (IPVGNYPVMTGGAVSLHSAGV) form a hydrophobic; possible role in virus entry into host cell region. The YGL motif; interaction with ITGA4 signature appears at 448–450 (YGL). Residues 484–518 (IINSVTVRQDLERQLGELRDEFNNLSQQIAMSQLI) adopt a coiled-coil conformation. Positions 510–776 (QQIAMSQLID…IESLIMQCRL (267 aa)) are spike foot. The KID motif; interaction with HSPA8 signature appears at 644-646 (KID).

The protein belongs to the rotavirus VP4 family. Homotrimer. VP4 adopts a dimeric appearance above the capsid surface, while forming a trimeric base anchored inside the capsid layer. Only hints of the third molecule are observed above the capsid surface. It probably performs a series of molecular rearrangements during viral entry. Prior to trypsin cleavage, it is flexible. The priming trypsin cleavage triggers its rearrangement into rigid spikes with approximate two-fold symmetry of their protruding parts. After an unknown second triggering event, cleaved VP4 may undergo another rearrangement, in which two VP5* subunits fold back on themselves and join a third subunit to form a tightly associated trimer, shaped like a folded umbrella. Interacts with VP6. Interacts with VP7. In terms of assembly, homotrimer. The trimer is coiled-coil stabilized by its C-terminus, however, its N-terminus, known as antigen domain or 'body', seems to be flexible allowing it to self-associate either as a dimer or a trimer. In terms of processing, proteolytic cleavage by trypsin results in activation of VP4 functions and greatly increases infectivity. The penetration into the host cell is dependent on trypsin treatment of VP4. It produces two peptides, VP5* and VP8* that remain associated with the virion. Cleavage of VP4 by trypsin probably occurs in vivo in the lumen of the intestine prior to infection of enterocytes. Trypsin seems to be incorporated into the three-layered viral particles but remains inactive as long as the viral outer capsid is intact and would only be activated upon the solubilization of the latter.

The protein localises to the virion. It is found in the host rough endoplasmic reticulum. It localises to the host cell membrane. Its subcellular location is the host cytoplasm. The protein resides in the host cytoskeleton. The protein localises to the host endoplasmic reticulum-Golgi intermediate compartment. In terms of biological role, spike-forming protein that mediates virion attachment to the host epithelial cell receptors and plays a major role in cell penetration, determination of host range restriction and virulence. Rotavirus attachment and entry into the host cell probably involves multiple sequential contacts between the outer capsid proteins VP4 and VP7, and the cell receptors. It is subsequently lost, together with VP7, following virus entry into the host cell. Following entry into the host cell, low intracellular or intravesicular Ca(2+) concentration probably causes the calcium-stabilized VP7 trimers to dissociate from the virion. This step is probably necessary for the membrane-disrupting entry step and the release of VP4, which is locked onto the virion by VP7. During the virus exit from the host cell, VP4 seems to be required to target the newly formed virions to the host cell lipid rafts. Forms the spike 'foot' and 'body' and acts as a membrane permeabilization protein that mediates release of viral particles from endosomal compartments into the cytoplasm. During entry, the part of VP5* that protrudes from the virus folds back on itself and reorganizes from a local dimer to a trimer. This reorganization may be linked to membrane penetration by exposing VP5* hydrophobic region. In integrin-dependent strains, VP5* targets the integrin heterodimer ITGA2/ITGB1 for cell attachment. Functionally, forms the head of the spikes and mediates the recognition of specific host cell surface glycans. It is the viral hemagglutinin and an important target of neutralizing antibodies. In sialic acid-dependent strains, VP8* binds to host cell sialic acid, most probably a ganglioside, providing the initial contact. In some other strains, VP8* mediates the attachment to histo-blood group antigens (HBGAs) for viral entry. This is Outer capsid protein VP4 from Rotavirus A (strain RVA/Cow/Canada/C486/1977/G6P6[1]) (RV-A).